The following is an 84-amino-acid chain: DNA-directed RNA polymerase subunit Rpo5 (84 aa).

Belongs to the archaeal Rpo5/eukaryotic RPB5 RNA polymerase subunit family. As to quaternary structure, part of the 13-subunit RNA polymerase complex.

The protein localises to the cytoplasm. The enzyme catalyses RNA(n) + a ribonucleoside 5'-triphosphate = RNA(n+1) + diphosphate. DNA-dependent RNA polymerase (RNAP) catalyzes the transcription of DNA into RNA using the four ribonucleoside triphosphates as substrates. The chain is DNA-directed RNA polymerase subunit Rpo5 from Saccharolobus solfataricus (strain ATCC 35092 / DSM 1617 / JCM 11322 / P2) (Sulfolobus solfataricus).